Consider the following 208-residue polypeptide: uncharacterized protein (208 aa).

Disordered regions lie at residues 91 to 115 (PGQA…PSQD), 127 to 156 (QSWS…KRPG), and 182 to 208 (NKLG…RKFK). Polar residues predominate over residues 127-136 (QSWSSGTSRP).

This is an uncharacterized protein from Rattus norvegicus (Rat).